We begin with the raw amino-acid sequence, 453 residues long: Ubiquitin-associated protein 1 (453 aa).

In terms of domain architecture, UMA spans 19 to 65; sequence LDDVPFKLNEKFRCPSKVGLPIGFCLSDCNAILSDLQYDFNLERRTV. The segment covering 83-93 has biased composition (basic and acidic residues); it reads EAIRTDSESER. 3 disordered regions span residues 83-119, 189-223, and 260-335; these read EAIR…QDIV, LQSQ…AKTG, and FPKL…AGTT. The span at 189–199 shows a compositional bias: low complexity; it reads LQSQPQSSVSP. Over residues 285-328 the composition is skewed to polar residues; that stretch reads NLSNGTPPSLQRTASNNNTTLPQEQPVFAQNGTPKQSNPVTVTS. 2 consecutive UBA domains span residues 340-381 and 403-449; these read SPSE…LFTH and GSEE…LMTR.

Component of an ESCRT-I complex (endosomal sorting complex required for transport I).

The protein resides in the cytoplasm. It localises to the cytosol. The protein localises to the endosome. Component of the ESCRT-I complex, a regulator of vesicular trafficking process. Binds to ubiquitinated cargo proteins and is required for the sorting of endocytic ubiquitinated cargos into multivesicular bodies (MVBs). The protein is Ubiquitin-associated protein 1 of Danio rerio (Zebrafish).